Consider the following 185-residue polypeptide: Elongation factor P (185 aa).

This sequence belongs to the elongation factor P family.

The protein resides in the cytoplasm. It functions in the pathway protein biosynthesis; polypeptide chain elongation. Involved in peptide bond synthesis. Stimulates efficient translation and peptide-bond synthesis on native or reconstituted 70S ribosomes in vitro. Probably functions indirectly by altering the affinity of the ribosome for aminoacyl-tRNA, thus increasing their reactivity as acceptors for peptidyl transferase. The protein is Elongation factor P of Streptococcus pyogenes serotype M28 (strain MGAS6180).